Reading from the N-terminus, the 999-residue chain is Sarcoplasmic/endoplasmic reticulum calcium ATPase 3 (999 aa).

An N-acetylmethionine modification is found at Met1. The Cytoplasmic segment spans residues 1 to 48 (MEEAHLLPAADVLRRFSVTAEGGLSPAQVTRARERYGPNELPTEEGKS). Position 17 is a phosphoserine (Ser17). Residue Thr19 is modified to Phosphothreonine. Ser25 carries the phosphoserine modification. Residues 49–69 (LWELVLEQFEDLLVRILLLAA) form a helical membrane-spanning segment. Over 70–89 (LVSFVLACFEEGEETTTAFV) the chain is Extracellular. Residues 90-110 (EPLVIVLILVANAVVGVWQER) traverse the membrane as a helical segment. Over 111-253 (NAENAIEALK…PERTPLQQKL (143 aa)) the chain is Cytoplasmic. The chain crosses the membrane as a helical span at residues 254 to 273 (DEFGRQLSRAISVICMAVWV). At 274-295 (INIGHFADPAHGGSWLRGAVYY) the chain is on the extracellular side. A helical transmembrane segment spans residues 296–313 (FKIAVALAVAAIPEGLPA). Residues Val304, Ala305, Ile307, and Glu309 each coordinate Ca(2+). Residues 314-757 (VITTCLALGT…EEGRAIYSNM (444 aa)) lie on the Cytoplasmic side of the membrane. Asp351 (4-aspartylphosphate intermediate) is an active-site residue. Residues Asp351 and Thr353 each contribute to the Mg(2+) site. ATP is bound at residue Thr353. Residues 370-400 (AEAEAGTCRLHEFTISGTTYAPEGEVRQGEQ) are interaction with phospholamban 1. A Phosphothreonine modification is found at Thr415. Residues Glu442, Arg489, Lys515, Arg560, Thr625, Gly626, and Asp627 each contribute to the ATP site. Position 662 is a phosphoserine (Ser662). ATP-binding residues include Arg678 and Lys684. Residue Asp703 coordinates Mg(2+). Residue Asn706 participates in ATP binding. The helical transmembrane segment at 758-777 (KQFIRYLISSNVGEVVCIFL) threads the bilayer. Ca(2+) contacts are provided by Asn768 and Glu771. The Extracellular portion of the chain corresponds to 778-787 (TAILGLPEAL). Residues 788–808 (IPVQLLWVNLVTDGLPATALG) traverse the membrane as a helical segment. Positions 788-808 (IPVQLLWVNLVTDGLPATALG) are interaction with phospholamban 2. Ca(2+)-binding residues include Asn796, Thr799, and Asp800. At 809-828 (FNPPDLDIMEKRPRNPREAL) the chain is on the cytoplasmic side. A helical transmembrane segment spans residues 829 to 851 (ISGWLFFRYLAIGVYVGLATVAA). Residues 852–897 (ATWWFLYDAEGPQVTFYQLRNFLKCSEDNPLFTGTDCEVFESRFPT) are Extracellular-facing. Cys876 and Cys888 are oxidised to a cystine. The helical transmembrane segment at 898-917 (TMALSVLVTTEMCNALNSVS) threads the bilayer. Residue Glu908 participates in Ca(2+) binding. Over 918 to 930 (ENQSLLRMPPWLN) the chain is Cytoplasmic. The helical transmembrane segment at 931 to 949 (PWLLAAVAMSMALHFLILL) threads the bilayer. Over 950 to 964 (VPPLPLIFQVTPLSG) the chain is Extracellular. The chain crosses the membrane as a helical span at residues 965-985 (RQWVVVLQISLPVILLDEALK). Residues 986 to 999 (YLSRKHVDEEKGRQ) lie on the Cytoplasmic side of the membrane.

The protein belongs to the cation transport ATPase (P-type) (TC 3.A.3) family. Type IIA subfamily. As to quaternary structure, interacts with sarcolipin (SLN). Interacts with phospholamban (PLN). Interacts with myoregulin (MRLN). Interacts with DWORF. Interacts with VMP1. Interacts with TUNAR; the interaction occurs at low levels in low glucose conditions and is increased by high glucose levels. Mg(2+) is required as a cofactor. As to expression, expressed in endothelial tissues.

Its subcellular location is the endoplasmic reticulum membrane. The protein resides in the sarcoplasmic reticulum membrane. It carries out the reaction Ca(2+)(in) + ATP + H2O = Ca(2+)(out) + ADP + phosphate + H(+). With respect to regulation, inhibited by sarcolipin (SLN), phospholamban (PLN) and myoregulin (MRLN). Enhanced by DWORF; DWORF increases activity by displacing sarcolipin (SLN), phospholamban (PLN) and myoregulin (MRLN). Functionally, this magnesium-dependent enzyme catalyzes the hydrolysis of ATP coupled with the transport of calcium. Transports calcium ions from the cytosol into the sarcoplasmic/endoplasmic reticulum lumen. Contributes to calcium sequestration involved in muscular excitation/contraction. The protein is Sarcoplasmic/endoplasmic reticulum calcium ATPase 3 (ATP2A3) of Sus scrofa (Pig).